We begin with the raw amino-acid sequence, 394 residues long: Elongation factor Tu (394 aa).

The 195-residue stretch at R10 to K204 folds into the tr-type G domain. Residues G19–T26 form a G1 region. G19–T26 is a binding site for GTP. T26 is a Mg(2+) binding site. The interval G60–N64 is G2. Residues D81–G84 are G3. GTP contacts are provided by residues D81–H85 and N136–D139. The interval N136 to D139 is G4. The segment at S174–L176 is G5.

Belongs to the TRAFAC class translation factor GTPase superfamily. Classic translation factor GTPase family. EF-Tu/EF-1A subfamily. As to quaternary structure, monomer.

The protein localises to the cytoplasm. The catalysed reaction is GTP + H2O = GDP + phosphate + H(+). In terms of biological role, GTP hydrolase that promotes the GTP-dependent binding of aminoacyl-tRNA to the A-site of ribosomes during protein biosynthesis. In Blochmanniella floridana, this protein is Elongation factor Tu.